Here is a 145-residue protein sequence, read N- to C-terminus: D-aminoacyl-tRNA deacylase (145 aa).

The Gly-cisPro motif, important for rejection of L-amino acids signature appears at 137–138; that stretch reads GP.

Belongs to the DTD family. As to quaternary structure, homodimer.

The protein resides in the cytoplasm. The catalysed reaction is glycyl-tRNA(Ala) + H2O = tRNA(Ala) + glycine + H(+). It carries out the reaction a D-aminoacyl-tRNA + H2O = a tRNA + a D-alpha-amino acid + H(+). Functionally, an aminoacyl-tRNA editing enzyme that deacylates mischarged D-aminoacyl-tRNAs. Also deacylates mischarged glycyl-tRNA(Ala), protecting cells against glycine mischarging by AlaRS. Acts via tRNA-based rather than protein-based catalysis; rejects L-amino acids rather than detecting D-amino acids in the active site. By recycling D-aminoacyl-tRNA to D-amino acids and free tRNA molecules, this enzyme counteracts the toxicity associated with the formation of D-aminoacyl-tRNA entities in vivo and helps enforce protein L-homochirality. The chain is D-aminoacyl-tRNA deacylase from Legionella pneumophila (strain Lens).